A 133-amino-acid polypeptide reads, in one-letter code: Small ribosomal subunit protein uS8 (133 aa).

Belongs to the universal ribosomal protein uS8 family. In terms of assembly, part of the 30S ribosomal subunit. Contacts proteins S5 and S12.

Functionally, one of the primary rRNA binding proteins, it binds directly to 16S rRNA central domain where it helps coordinate assembly of the platform of the 30S subunit. The protein is Small ribosomal subunit protein uS8 of Syntrophus aciditrophicus (strain SB).